Reading from the N-terminus, the 167-residue chain is Disulfide bond formation protein B (167 aa).

The Cytoplasmic segment spans residues 1–12; the sequence is MFLNLLDAPRRL. A helical membrane pass occupies residues 13–29; the sequence is LALVALGCVALLAFGLY. The Periplasmic portion of the chain corresponds to 30–47; sequence LQHVVGLEPCPMCIVQRY. Residues C39 and C42 are joined by a disulfide bond. Residues 48–63 form a helical membrane-spanning segment; the sequence is ALVLVAIVAGLTAITS. Residues 64–69 are Cytoplasmic-facing; the sequence is NKKGLI. A helical transmembrane segment spans residues 70 to 87; the sequence is TGSGVLLLLAGFGAFVAA. Topologically, residues 88-143 are periplasmic; the sequence is RQSFLQWYPPEVASCGRDFYGMIETFPLQRAIPMIFKGSGDCAKVDWTFLGGSIAN. A disulfide bridge connects residues C102 and C129. Residues 144–162 traverse the membrane as a helical segment; sequence WSFVCFAVIGLTALTLIAR. At 163–167 the chain is on the cytoplasmic side; that stretch reads LARQR.

This sequence belongs to the DsbB family.

Its subcellular location is the cell inner membrane. Required for disulfide bond formation in some periplasmic proteins. Acts by oxidizing the DsbA protein. This chain is Disulfide bond formation protein B, found in Polaromonas naphthalenivorans (strain CJ2).